Reading from the N-terminus, the 211-residue chain is Large ribosomal subunit protein uL4 (211 aa).

A disordered region spans residues alanine 42–glycine 87. A compositionally biased stretch (basic residues) spans glycine 60–glycine 71.

This sequence belongs to the universal ribosomal protein uL4 family. As to quaternary structure, part of the 50S ribosomal subunit.

Its function is as follows. One of the primary rRNA binding proteins, this protein initially binds near the 5'-end of the 23S rRNA. It is important during the early stages of 50S assembly. It makes multiple contacts with different domains of the 23S rRNA in the assembled 50S subunit and ribosome. Forms part of the polypeptide exit tunnel. This Synechococcus sp. (strain CC9902) protein is Large ribosomal subunit protein uL4.